The primary structure comprises 150 residues: Probable cyclic pyranopterin monophosphate synthase (150 aa).

Substrate contacts are provided by residues 68–70 (YCH) and 104–105 (ME). Asp-119 is an active-site residue.

This sequence belongs to the MoaC family. As to quaternary structure, homohexamer; trimer of dimers.

The catalysed reaction is (8S)-3',8-cyclo-7,8-dihydroguanosine 5'-triphosphate = cyclic pyranopterin phosphate + diphosphate. The protein operates within cofactor biosynthesis; molybdopterin biosynthesis. Functionally, catalyzes the conversion of (8S)-3',8-cyclo-7,8-dihydroguanosine 5'-triphosphate to cyclic pyranopterin monophosphate (cPMP). In Thermoplasma volcanium (strain ATCC 51530 / DSM 4299 / JCM 9571 / NBRC 15438 / GSS1), this protein is Probable cyclic pyranopterin monophosphate synthase.